Consider the following 253-residue polypeptide: Flap endonuclease Xni (253 aa).

D105 provides a ligand contact to Mg(2+). One can recognise a 5'-3' exonuclease domain in the interval 162–251 (ERHQLLDYIA…HLKLSDLRVN (90 aa)). L172, P181, I183, and I186 together coordinate K(+). Residues 185 to 190 (GIGPKS) form an interaction with DNA region.

Belongs to the Xni family. Requires Mg(2+) as cofactor. K(+) serves as cofactor.

Has flap endonuclease activity. During DNA replication, flap endonucleases cleave the 5'-overhanging flap structure that is generated by displacement synthesis when DNA polymerase encounters the 5'-end of a downstream Okazaki fragment. This Shewanella amazonensis (strain ATCC BAA-1098 / SB2B) protein is Flap endonuclease Xni.